A 205-amino-acid chain; its full sequence is Thymidylate kinase (205 aa).

An ATP-binding site is contributed by 7–14 (GIDGSGKT).

The protein belongs to the thymidylate kinase family.

The enzyme catalyses dTMP + ATP = dTDP + ADP. In terms of biological role, phosphorylation of dTMP to form dTDP in both de novo and salvage pathways of dTTP synthesis. The polypeptide is Thymidylate kinase (Wolbachia sp. subsp. Brugia malayi (strain TRS)).